Consider the following 247-residue polypeptide: Carboxy-S-adenosyl-L-methionine synthase (247 aa).

S-adenosyl-L-methionine contacts are provided by residues Tyr-40, 65–67 (GCS), 90–91 (DN), 122–123 (DI), Asn-137, and Arg-204.

Belongs to the class I-like SAM-binding methyltransferase superfamily. Cx-SAM synthase family. Homodimer.

It catalyses the reaction prephenate + S-adenosyl-L-methionine = carboxy-S-adenosyl-L-methionine + 3-phenylpyruvate + H2O. In terms of biological role, catalyzes the conversion of S-adenosyl-L-methionine (SAM) to carboxy-S-adenosyl-L-methionine (Cx-SAM). The chain is Carboxy-S-adenosyl-L-methionine synthase from Pseudomonas syringae pv. tomato (strain ATCC BAA-871 / DC3000).